A 144-amino-acid chain; its full sequence is Transcription antitermination protein NusB (144 aa).

The protein belongs to the NusB family.

Involved in transcription antitermination. Required for transcription of ribosomal RNA (rRNA) genes. Binds specifically to the boxA antiterminator sequence of the ribosomal RNA (rrn) operons. In Haemophilus influenzae (strain PittEE), this protein is Transcription antitermination protein NusB.